We begin with the raw amino-acid sequence, 285 residues long: NAD kinase (285 aa).

The active-site Proton acceptor is the Asp68. NAD(+)-binding positions include 68-69 (DG), 142-143 (ND), Arg153, Lys170, Asp172, 183-188 (TAYNLS), and Gln242.

Belongs to the NAD kinase family. The cofactor is a divalent metal cation.

The protein localises to the cytoplasm. The enzyme catalyses NAD(+) + ATP = ADP + NADP(+) + H(+). Functionally, involved in the regulation of the intracellular balance of NAD and NADP, and is a key enzyme in the biosynthesis of NADP. Catalyzes specifically the phosphorylation on 2'-hydroxyl of the adenosine moiety of NAD to yield NADP. This is NAD kinase from Syntrophotalea carbinolica (strain DSM 2380 / NBRC 103641 / GraBd1) (Pelobacter carbinolicus).